Reading from the N-terminus, the 286-residue chain is Ribosome-inactivating protein momordin I (286 aa).

The signal sequence occupies residues Met1–Gly23. Glu183 is a catalytic residue. An N-linked (GlcNAc...) asparagine glycan is attached at Asn250. The propeptide at Ala270 to Tyr286 is removed in mature form.

This sequence belongs to the ribosome-inactivating protein family. Type 1 RIP subfamily.

The catalysed reaction is Endohydrolysis of the N-glycosidic bond at one specific adenosine on the 28S rRNA.. In Momordica charantia (Bitter gourd), this protein is Ribosome-inactivating protein momordin I.